The sequence spans 1140 residues: Receptor-type guanylate cyclase gcy-3 (1140 aa).

The N-terminal stretch at Met1–Leu21 is a signal peptide. Topologically, residues Gln22–Gly495 are extracellular. N-linked (GlcNAc...) asparagine glycans are attached at residues Asn220, Asn301, Asn349, Asn385, Asn418, Asn441, and Asn459. A helical membrane pass occupies residues Ile496–Phe516. The Cytoplasmic segment spans residues Leu517 to Ile1140. Positions Phe538–Met826 constitute a Protein kinase domain. ATP-binding positions include Leu544–Ser552 and Lys582. One can recognise a Guanylate cyclase domain in the interval Thr897–Glu1027. The disordered stretch occupies residues Pro1083–Ile1140. The span at Ser1084 to Arg1097 shows a compositional bias: polar residues. A compositionally biased stretch (low complexity) spans Arg1109–Asn1126.

It belongs to the adenylyl cyclase class-4/guanylyl cyclase family. In terms of tissue distribution, expressed asymmetrically in ASE right (ASER) sensory neuron and bilaterally in ASI sensory neurons. Expressed in PVT interneuron.

Its subcellular location is the cell membrane. It carries out the reaction GTP = 3',5'-cyclic GMP + diphosphate. Guanylate cyclase involved in the production of the second messenger cGMP. The polypeptide is Receptor-type guanylate cyclase gcy-3 (Caenorhabditis elegans).